The primary structure comprises 510 residues: GMP synthase [glutamine-hydrolyzing] (510 aa).

The Glutamine amidotransferase type-1 domain occupies 5–195 (LVLVVDFGGQ…LFNVCNLKGD (191 aa)). The active-site Nucleophile is Cys-82. Active-site residues include His-169 and Glu-171. In terms of domain architecture, GMPS ATP-PPase spans 196-385 (WSMSSFAEQQ…LGIPHKLVWR (190 aa)). ATP is bound at residue 223 to 229 (SGGVDSS).

Homodimer.

It carries out the reaction XMP + L-glutamine + ATP + H2O = GMP + L-glutamate + AMP + diphosphate + 2 H(+). Its pathway is purine metabolism; GMP biosynthesis; GMP from XMP (L-Gln route): step 1/1. Catalyzes the synthesis of GMP from XMP. This is GMP synthase [glutamine-hydrolyzing] from Clostridium botulinum (strain Loch Maree / Type A3).